Reading from the N-terminus, the 211-residue chain is Urease accessory protein UreE (211 aa).

Positions 170 to 211 (EHHGHSHDRGCDHSHSHSHDHDHDHGHVHGPGCGHAPHHRHD) are disordered. Residues 176–196 (HDRGCDHSHSHSHDHDHDHGH) show a composition bias toward basic and acidic residues.

This sequence belongs to the UreE family.

The protein resides in the cytoplasm. Functionally, involved in urease metallocenter assembly. Binds nickel. Probably functions as a nickel donor during metallocenter assembly. In Ralstonia nicotianae (strain ATCC BAA-1114 / GMI1000) (Ralstonia solanacearum), this protein is Urease accessory protein UreE.